Consider the following 1239-residue polypeptide: Zinc finger and BTB domain-containing protein 40 (1239 aa).

In terms of domain architecture, BTB spans 24 to 87 (CDCTISIGTI…MYTGKLPVGK (64 aa)). Disordered regions lie at residues 130-231 (SAPS…TSTE), 687-732 (HLEA…PDPA), and 779-801 (KELD…PKKK). The segment covering 136–145 (TFRKEPEKPQ) has biased composition (basic and acidic residues). A compositionally biased stretch (polar residues) spans 181–199 (SVSQEMSVNSPTAQESQRN). Serine 190 is modified (phosphoserine). Residues 200 to 212 (AETPAETPTTAEA) are compositionally biased toward low complexity. Residues 687-703 (HLEANNKEDEKAAKEDS) are compositionally biased toward basic and acidic residues. Position 703 is a phosphoserine (serine 703). Residues 705 to 719 (PGEQNDQGETGSLPG) show a composition bias toward polar residues. 10 consecutive C2H2-type zinc fingers follow at residues 807-830 (VTCD…LTEH), 836-858 (FSCE…LRLH), 864-887 (FMCK…KKKH), 893-915 (YACQ…VRTH), 921-944 (YVCR…HTFH), 950-973 (YDCK…HEVH), 978-1000 (HPCP…VVTH), 1006-1029 (FSCG…RTHH), 1046-1069 (LQCS…KAEH), and 1075-1098 (HECD…KCQH). Residue lysine 1066 forms a Glycyl lysine isopeptide (Lys-Gly) (interchain with G-Cter in SUMO2) linkage. The C2H2-type 11; atypical zinc-finger motif lies at 1104–1127 (FRCLYCAATFRFPGALQHHVTTEH). A C2H2-type 12 zinc finger spans residues 1135 to 1158 (FPCELCGELFTSQAQLDSHLESEH).

It belongs to the krueppel C2H2-type zinc-finger protein family.

The protein resides in the nucleus. Its function is as follows. May be involved in transcriptional regulation. In Homo sapiens (Human), this protein is Zinc finger and BTB domain-containing protein 40 (ZBTB40).